We begin with the raw amino-acid sequence, 250 residues long: Adenosylcobinamide-GDP ribazoletransferase (250 aa).

Helical transmembrane passes span 31 to 51, 55 to 75, 106 to 126, 133 to 153, 187 to 207, and 230 to 250; these read ISYL…VYFV, FILG…ITGA, VGTN…AVLN, IIIA…LLMC, IGYV…VLFI, and NEIA…CGLL.

It belongs to the CobS family. The cofactor is Mg(2+).

It is found in the cell membrane. The catalysed reaction is alpha-ribazole + adenosylcob(III)inamide-GDP = adenosylcob(III)alamin + GMP + H(+). The enzyme catalyses alpha-ribazole 5'-phosphate + adenosylcob(III)inamide-GDP = adenosylcob(III)alamin 5'-phosphate + GMP + H(+). The protein operates within cofactor biosynthesis; adenosylcobalamin biosynthesis; adenosylcobalamin from cob(II)yrinate a,c-diamide: step 7/7. In terms of biological role, joins adenosylcobinamide-GDP and alpha-ribazole to generate adenosylcobalamin (Ado-cobalamin). Also synthesizes adenosylcobalamin 5'-phosphate from adenosylcobinamide-GDP and alpha-ribazole 5'-phosphate. The chain is Adenosylcobinamide-GDP ribazoletransferase from Clostridium novyi (strain NT).